Here is a 240-residue protein sequence, read N- to C-terminus: Uridylate kinase (240 aa).

12 to 15 is an ATP binding site; the sequence is KLSG. The involved in allosteric activation by GTP stretch occupies residues 20-25; sequence GEQGNG. Gly-54 is a UMP binding site. Residues Gly-55 and Arg-59 each contribute to the ATP site. Residues Asp-74 and 135-142 contribute to the UMP site; that span reads TGNPYFST. ATP-binding residues include Asn-163, Tyr-169, and Asp-172.

This sequence belongs to the UMP kinase family. In terms of assembly, homohexamer. Interacts with BrxC.

The protein resides in the cytoplasm. It carries out the reaction UMP + ATP = UDP + ADP. Its pathway is pyrimidine metabolism; CTP biosynthesis via de novo pathway; UDP from UMP (UMPK route): step 1/1. Allosterically activated by GTP. Can also be activated by dGTP and 3'-anthraniloyl-2'-deoxyguanosine-5'-triphosphate (Ant-dGTP). Inhibited by UTP, 5-bromo-UTP and 5-iodo-UTP. Catalyzes the reversible phosphorylation of UMP to UDP, with ATP or dATP as the most efficient phosphate donors. Is also able to phosphorylate 5-fluoro-UMP and 6-aza-UMP. The sequence is that of Uridylate kinase (pyrH) from Bacillus subtilis (strain 168).